We begin with the raw amino-acid sequence, 284 residues long: Bifunctional protein FolD (284 aa).

NADP(+) contacts are provided by residues 166–168 (GAS) and Ile-232.

Belongs to the tetrahydrofolate dehydrogenase/cyclohydrolase family. As to quaternary structure, homodimer.

The enzyme catalyses (6R)-5,10-methylene-5,6,7,8-tetrahydrofolate + NADP(+) = (6R)-5,10-methenyltetrahydrofolate + NADPH. The catalysed reaction is (6R)-5,10-methenyltetrahydrofolate + H2O = (6R)-10-formyltetrahydrofolate + H(+). It functions in the pathway one-carbon metabolism; tetrahydrofolate interconversion. Catalyzes the oxidation of 5,10-methylenetetrahydrofolate to 5,10-methenyltetrahydrofolate and then the hydrolysis of 5,10-methenyltetrahydrofolate to 10-formyltetrahydrofolate. This chain is Bifunctional protein FolD, found in Glaesserella parasuis serovar 5 (strain SH0165) (Haemophilus parasuis).